The chain runs to 456 residues: MNVPRETIAAIATAQGRGGVGIIRVSGPLAGKAAEAIIGRTLKPRFAHYGPFVDGTGQVLDEGIALYFPGPNSFTGEDVLELQGHGGPIVLDMLLQRCLQLGSRLARPGEFSERAFLNDKLDLAQAEAIADLIEASSAQAARNALRSLQGAFSRRVDNLTEKLISLRIYVEAAIDFPEEEIDFLADGHVLNMLDDVRAELSTVLREAGQGALLRDGMTVVIAGRPNAGKSSLLNALAGREAAIVTEIAGTTRDVLREHIHIDGMPLHVVDTAGLRDTQDQVEMIGVQRALKAIGEADRILLVVDATAPEAADPFALWPEFLEQRPDPSKVTLIRNKADLSGDPINLQTSVDGHVTISLSARSGGEGLELLREHLKACMGYEQTSESSFSARRRHLEALRHASDSLEHGRAQLTLAGAGELLAEDLRQAQQALGEITGAFSSDDLLGRIFSSFCIGK.

Residues Arg24, Glu81, and Lys120 each coordinate (6S)-5-formyl-5,6,7,8-tetrahydrofolate. Positions 216–379 constitute a TrmE-type G domain; that stretch reads GMTVVIAGRP…LREHLKACMG (164 aa). Asn226 is a binding site for K(+). GTP contacts are provided by residues 226 to 231, 245 to 251, 270 to 273, 335 to 338, and 359 to 361; these read NAGKSS, TEIAGTT, DTAG, NKAD, and SAR. Ser230 is a binding site for Mg(2+). Residues Thr245, Ile247, and Thr250 each coordinate K(+). Thr251 contributes to the Mg(2+) binding site. Residue Lys456 participates in (6S)-5-formyl-5,6,7,8-tetrahydrofolate binding.

The protein belongs to the TRAFAC class TrmE-Era-EngA-EngB-Septin-like GTPase superfamily. TrmE GTPase family. Homodimer. Heterotetramer of two MnmE and two MnmG subunits. It depends on K(+) as a cofactor.

Its subcellular location is the cytoplasm. Functionally, exhibits a very high intrinsic GTPase hydrolysis rate. Involved in the addition of a carboxymethylaminomethyl (cmnm) group at the wobble position (U34) of certain tRNAs, forming tRNA-cmnm(5)s(2)U34. The chain is tRNA modification GTPase MnmE from Pseudomonas syringae pv. syringae (strain B728a).